A 201-amino-acid polypeptide reads, in one-letter code: Peptide deformylase (201 aa).

The disordered stretch occupies residues 1–24; sequence MANHFSQLAKKSKTNGNSEKIAKE. Residues Cys-121 and His-163 each coordinate Fe cation. Glu-164 is an active-site residue. A Fe cation-binding site is contributed by His-167.

It belongs to the polypeptide deformylase family. The cofactor is Fe(2+).

The catalysed reaction is N-terminal N-formyl-L-methionyl-[peptide] + H2O = N-terminal L-methionyl-[peptide] + formate. Functionally, removes the formyl group from the N-terminal Met of newly synthesized proteins. Requires at least a dipeptide for an efficient rate of reaction. N-terminal L-methionine is a prerequisite for activity but the enzyme has broad specificity at other positions. The protein is Peptide deformylase of Prochlorococcus marinus (strain MIT 9312).